The following is an 867-amino-acid chain: Cilium assembly protein DZIP1 (867 aa).

Residues 12–203 (MPFQKHVYYP…KANYYQCHFC (192 aa)) form a mediates interaction with PCM1 region. Residues 12–367 (MPFQKHVYYP…QDFHNVMQLL (356 aa)) are mediates interaction with GLI3 and localization to the cilium basal body. The tract at residues 154–278 (CDGEQSKKLL…SKEYEMQKTK (125 aa)) is required for interaction with DAZ1. The C2H2-type zinc-finger motif lies at 198–221 (YQCHFCDKAFMNQAFLQSHIQRRH). At Ser226 the chain carries Phosphoserine; by PLK1. Coiled coils occupy residues 230 to 340 (YQKN…KSNI), 401 to 445 (TSMI…FTCN), and 568 to 588 (DQLHRVLKSVESERHKQEREI). Residues 446-617 (PLNSISEPKG…EKALLSSDQC (172 aa)) are mediates interaction with GDI2 and RAB8A. Composition is skewed to polar residues over residues 643–654 (LIRQKAVSTDRT), 671–680 (KSSTITTPPF), and 708–718 (NKGSFGKNTVK). Disordered stretches follow at residues 643–768 (LIRQ…GGTN) and 796–867 (SLEE…TSDV). Acidic residues predominate over residues 722-733 (DGTEGSEIEDTD). The span at 807-823 (SGKEQKEPPPAKNEPHF) shows a compositional bias: basic and acidic residues. Positions 848 to 859 (SSTLKSSLVTVT) are enriched in low complexity.

It belongs to the DZIP C2H2-type zinc-finger protein family. Interacts with DAZ1. Interacts with the BBSome; recruits the BBSome to centriolar satellites of the cilium. Interacts with PCM1; localizes DZIP1 and the associated BBSome to centriolar satellites. Interacts with RAB8A (GDP-bound inactive form); recruits RAB8A to the basal body of the cilium and prevents its inhibition by GDI2. Interacts with GDI2; negatively regulates the interaction of GDI2 with GDP-bound RAB8A. Interacts with GLI3; retains GLI3 within the cytoplasm. Interacts with CEP164. Interacts with IFT88. Post-translationally, phosphorylation at Ser-226 by PLK1 before mitosis prevents interaction with PCM1 and localization to centriolar satellites. Thereby, it negatively regulates the localization of the BBSome to centriolar satellites. As to expression, predominantly expressed in testis (at protein level). Also expressed in fetal brain, adult oocytes and ovary. Expressed in undifferentiated ES cells. In testis, it is specifically expressed in germ cells (at protein level). Expressed in mature germ cells and secondary spermatocytes, while it is weakly or not expressed in primary spermatocytes.

It is found in the cytoplasm. The protein resides in the cytoskeleton. The protein localises to the cilium basal body. It localises to the microtubule organizing center. Its subcellular location is the centrosome. It is found in the centriolar satellite. The protein resides in the centriole. The protein localises to the nucleus. It localises to the nucleus speckle. Its function is as follows. Molecular adapter that recruits protein complexes required for cilium assembly and function to the cilium basal body. At the exit of mitosis, localizes to the basal body and ciliary base of the forming primary cilium where it recruits and activates RAB8A to direct vesicle-mediated transport of proteins to the cilium. Also recruits the BBSome, a complex involved in cilium biogenesis, by bridging it to PCM1 at the centriolar satellites of the cilium. It is also required for the recruitment to the cilium basal body of the intraflagellar transport (IFT) machinery as well as the ciliary appendage proteins CEP164 and NINEIN. Functions as a regulator of Hedgehog signaling both through its role in cilium assembly but also probably through its ability to retain GLI3 within the cytoplasm. It is involved in spermatogenesis through its role in organization of the basal body and assembly of the sperm flagellum. Also indirectly involved in heart development through its function in ciliogenesis. This chain is Cilium assembly protein DZIP1, found in Homo sapiens (Human).